A 287-amino-acid polypeptide reads, in one-letter code: Bifunctional protein FolD (287 aa).

NADP(+)-binding positions include 166 to 168 (GAS) and Ile-232.

The protein belongs to the tetrahydrofolate dehydrogenase/cyclohydrolase family. Homodimer.

The enzyme catalyses (6R)-5,10-methylene-5,6,7,8-tetrahydrofolate + NADP(+) = (6R)-5,10-methenyltetrahydrofolate + NADPH. The catalysed reaction is (6R)-5,10-methenyltetrahydrofolate + H2O = (6R)-10-formyltetrahydrofolate + H(+). The protein operates within one-carbon metabolism; tetrahydrofolate interconversion. Catalyzes the oxidation of 5,10-methylenetetrahydrofolate to 5,10-methenyltetrahydrofolate and then the hydrolysis of 5,10-methenyltetrahydrofolate to 10-formyltetrahydrofolate. The protein is Bifunctional protein FolD of Aeromonas hydrophila subsp. hydrophila (strain ATCC 7966 / DSM 30187 / BCRC 13018 / CCUG 14551 / JCM 1027 / KCTC 2358 / NCIMB 9240 / NCTC 8049).